The primary structure comprises 307 residues: MIKKRSILIVTRKSPLALWQAEFVKQQIENSHPHLACQILGCTTQGDRLTTEKLVDSGGKDLFVKDLQKALLNRDADIAVHSIKDMSACDGPELMVGAFIRREDPRDVLIVKGELSTLPPHAVIGTSSPRRQCQLKKFQPGCKIKEIRGNVGTRLAKLDAGHYEAIVLAAAGLKRLGLENRIHYYFDPHEFIPAIGQGAIGVECRSDDHEMQTLLKSLDHRETRLCVTAERAVNEKLGGDCFTPIAAHAIIKNDQFSLFAMLGKIDGRVIIRATEIGNSEEAKRIGFKVASQLLEQGGDSLLRELKQ.

An S-(dipyrrolylmethanemethyl)cysteine modification is found at C241.

Belongs to the HMBS family. Monomer. It depends on dipyrromethane as a cofactor.

It catalyses the reaction 4 porphobilinogen + H2O = hydroxymethylbilane + 4 NH4(+). It functions in the pathway porphyrin-containing compound metabolism; protoporphyrin-IX biosynthesis; coproporphyrinogen-III from 5-aminolevulinate: step 2/4. In terms of biological role, tetrapolymerization of the monopyrrole PBG into the hydroxymethylbilane pre-uroporphyrinogen in several discrete steps. This chain is Porphobilinogen deaminase, found in Coxiella burnetii (strain RSA 331 / Henzerling II).